The sequence spans 419 residues: Protein FAM217A (419 aa).

Disordered regions lie at residues 1 to 60 (MGRK…LENP), 96 to 119 (KGST…DLSE), 236 to 299 (SSSK…SRAL), and 317 to 382 (KNSK…RTKK). Over residues 7-19 (ESCSSSLHVSSIS) the composition is skewed to low complexity. A compositionally biased stretch (low complexity) spans 236-251 (SSSKAIATKAKAPKIP). Polar residues-rich tracts occupy residues 252–261 (ETSTLQTSGV) and 271–281 (NSGSGKPEQNV). 2 stretches are compositionally biased toward low complexity: residues 282–296 (SKWS…KSNS) and 334–345 (PTTTTQATQPMA).

This sequence belongs to the FAM217 family.

The polypeptide is Protein FAM217A (Fam217a) (Mus musculus (Mouse)).